Consider the following 795-residue polypeptide: MKFSESWLREWVNPAITTDELTHQITMAGLEVDDVLAVAGVFDGVKVGHVVECAQHPDADKLRVTKVDVGEEELLDIVCGAANCRQGLKVAVATVGATLPGDFKIKKAKLRGQPSHGMLCSFSELGIDVESNGIMELAENAPIGMDFRDFLSLNDVTIDVDLTSNRADCFSIRGLAREVGVLNRADVTAPAVNAIVATINDTISIDVKAPAACPRYLGRIVKNVNVQAQTPLWMQEKLRRCGIRSIDPVVDITNFVMLEQGQPMHAFDLAKIEGGIVVRLAEQDEKLTLLDGSEAKLNADTLVIADQQKALAIAGVFGGEHSGVSTDTKDVLLECAFFAPDHIRGRARSYGLHTDSSMRFERGVDYALQHAAMERATQLLVEICGGDVAPVVAAESAADLPKPNQVALRRSKLDKLLGHAIPDADVVEILERLGMQVETTAEGWQATAPTWRFDIAIEQDLVEEVGRIYGYNNIPNQAPVAALNMNLHNEAKLPLKRVRDLLVDRGYQEAITYSFVEPEQQKLVVPGVDALILPNPISAEMSAMRLSLIQGLLNTVVHNQKRQQPRVRLFEYGLRFIPDAAAENGMRQEPMLAGVISGARGEEHWNMETATVDFFDMKGDLEAVLELTAKGKAYSFAATKHPALHPGQAAAIMVDGKAIGVIGTVHPELERKFGLNGRTIVFEIEWNAINTRVIPEAAAISKFPANRRDIALVVDGNIASGDIVEACRVAGGELLKDAKLFDVYVGKGVEEGKKSLAIALTLQSVERTLEEADIAAAVEAIVQAVSAQFGAALRD.

The region spanning 39 to 148 (AGVFDGVKVG…ENAPIGMDFR (110 aa)) is the tRNA-binding domain. Residues 401 to 476 (PKPNQVALRR…RIYGYNNIPN (76 aa)) form the B5 domain. The Mg(2+) site is built by Asp-454, Asp-460, Glu-463, and Glu-464. The FDX-ACB domain occupies 701-794 (SKFPANRRDI…VSAQFGAALR (94 aa)).

It belongs to the phenylalanyl-tRNA synthetase beta subunit family. Type 1 subfamily. As to quaternary structure, tetramer of two alpha and two beta subunits. Mg(2+) serves as cofactor.

It is found in the cytoplasm. It catalyses the reaction tRNA(Phe) + L-phenylalanine + ATP = L-phenylalanyl-tRNA(Phe) + AMP + diphosphate + H(+). This is Phenylalanine--tRNA ligase beta subunit (pheT) from Vibrio cholerae serotype O1 (strain ATCC 39315 / El Tor Inaba N16961).